A 377-amino-acid chain; its full sequence is Histidinol-phosphate aminotransferase 2 (377 aa).

Positions 17 to 44 are disordered; sequence NLSPYVPGEQPQHDDLCKLNTNENPFPP. K228 is subject to N6-(pyridoxal phosphate)lysine.

This sequence belongs to the class-II pyridoxal-phosphate-dependent aminotransferase family. Histidinol-phosphate aminotransferase subfamily. Homodimer. Pyridoxal 5'-phosphate is required as a cofactor.

The catalysed reaction is L-histidinol phosphate + 2-oxoglutarate = 3-(imidazol-4-yl)-2-oxopropyl phosphate + L-glutamate. The protein operates within amino-acid biosynthesis; L-histidine biosynthesis; L-histidine from 5-phospho-alpha-D-ribose 1-diphosphate: step 7/9. This is Histidinol-phosphate aminotransferase 2 from Psychrobacter arcticus (strain DSM 17307 / VKM B-2377 / 273-4).